A 381-amino-acid polypeptide reads, in one-letter code: MTETQSLELAKALISRPSVTPDDRDCQKLLAERLHKIGFAAEELHFGDTKNIWLRRGTKAPVVCFAGHTDVVPTGPVEKWDSPPFEPTERDGRLYGRGAADMKTSIACFVTACERFVAEHPDHQGSIALLITSDEEGDALDGTTKVVDVLKARGELIDYCIVGEPTAVDKLGDMIKNGRRGSLSGNLTVKGKQGHIAYPHLAVNPVHTFAPALLELTQEVWDEGNEYFPPTSFQISNINGGTGATNVIPGELNVKFNFRFSTESTETGLKQRVHAILDKHGVQYDLQWSCSGQPFLTHAGKLTDVARTAIAETCGVEAELSTTGGTSDGRFIKAIAKELIELGPSNATIHQINENVRLDDIPKLSAVYERILARLLAEKAV.

Histidine 68 contacts Zn(2+). Residue aspartate 70 is part of the active site. Aspartate 101 lines the Zn(2+) pocket. The active-site Proton acceptor is glutamate 135. Residues glutamate 136, glutamate 164, and histidine 350 each coordinate Zn(2+).

Belongs to the peptidase M20A family. DapE subfamily. As to quaternary structure, homodimer. It depends on Zn(2+) as a cofactor. Co(2+) serves as cofactor.

The catalysed reaction is N-succinyl-(2S,6S)-2,6-diaminopimelate + H2O = (2S,6S)-2,6-diaminopimelate + succinate. Its pathway is amino-acid biosynthesis; L-lysine biosynthesis via DAP pathway; LL-2,6-diaminopimelate from (S)-tetrahydrodipicolinate (succinylase route): step 3/3. Catalyzes the hydrolysis of N-succinyl-L,L-diaminopimelic acid (SDAP), forming succinate and LL-2,6-diaminopimelate (DAP), an intermediate involved in the bacterial biosynthesis of lysine and meso-diaminopimelic acid, an essential component of bacterial cell walls. The chain is Succinyl-diaminopimelate desuccinylase from Neisseria gonorrhoeae (strain NCCP11945).